Here is a 319-residue protein sequence, read N- to C-terminus: Ribose-phosphate pyrophosphokinase (319 aa).

ATP is bound by residues 40–42 (DGE) and 99–100 (RQ). Positions 134 and 174 each coordinate Mg(2+). The active site involves K198. D-ribose 5-phosphate-binding positions include R200, D224, and 228–232 (DTAGT).

Belongs to the ribose-phosphate pyrophosphokinase family. Class I subfamily. Homohexamer. It depends on Mg(2+) as a cofactor.

Its subcellular location is the cytoplasm. It carries out the reaction D-ribose 5-phosphate + ATP = 5-phospho-alpha-D-ribose 1-diphosphate + AMP + H(+). It functions in the pathway metabolic intermediate biosynthesis; 5-phospho-alpha-D-ribose 1-diphosphate biosynthesis; 5-phospho-alpha-D-ribose 1-diphosphate from D-ribose 5-phosphate (route I): step 1/1. Involved in the biosynthesis of the central metabolite phospho-alpha-D-ribosyl-1-pyrophosphate (PRPP) via the transfer of pyrophosphoryl group from ATP to 1-hydroxyl of ribose-5-phosphate (Rib-5-P). The chain is Ribose-phosphate pyrophosphokinase from Xanthomonas axonopodis pv. citri (strain 306).